Here is a 297-residue protein sequence, read N- to C-terminus: ATP phosphoribosyltransferase (297 aa).

Belongs to the ATP phosphoribosyltransferase family.

It localises to the cytoplasm. The catalysed reaction is 1-(5-phospho-beta-D-ribosyl)-ATP + diphosphate = 5-phospho-alpha-D-ribose 1-diphosphate + ATP. Its pathway is amino-acid biosynthesis; L-histidine biosynthesis; L-histidine from 5-phospho-alpha-D-ribose 1-diphosphate: step 1/9. In terms of biological role, catalyzes the condensation of ATP and 5-phosphoribose 1-diphosphate to form N'-(5'-phosphoribosyl)-ATP (PR-ATP). Has a crucial role in the pathway because the rate of histidine biosynthesis seems to be controlled primarily by regulation of the enzymatic activity. This Kluyveromyces lactis (strain ATCC 8585 / CBS 2359 / DSM 70799 / NBRC 1267 / NRRL Y-1140 / WM37) (Yeast) protein is ATP phosphoribosyltransferase (HIS1).